A 284-amino-acid chain; its full sequence is Urease accessory protein UreD (284 aa).

This sequence belongs to the UreD family. UreD, UreF and UreG form a complex that acts as a GTP-hydrolysis-dependent molecular chaperone, activating the urease apoprotein by helping to assemble the nickel containing metallocenter of UreC. The UreE protein probably delivers the nickel.

It is found in the cytoplasm. Its function is as follows. Required for maturation of urease via the functional incorporation of the urease nickel metallocenter. This is Urease accessory protein UreD from Bordetella bronchiseptica (strain ATCC BAA-588 / NCTC 13252 / RB50) (Alcaligenes bronchisepticus).